The primary structure comprises 629 residues: Polyadenylate-binding protein 2 (629 aa).

A compositionally biased stretch (polar residues) spans 1-12 (MAQVQLQGQTPN). Residues 1 to 25 (MAQVQLQGQTPNGSTAAVTSAPATS) form a disordered region. Residues 13 to 25 (GSTAAVTSAPATS) show a composition bias toward low complexity. 4 consecutive RRM domains span residues 36–114 (TSLY…YSHR), 124–201 (GNIF…PFLR), 215–292 (TNVY…RAQK), and 318–395 (SNLY…IAQR). The disordered stretch occupies residues 480-507 (PQQQRPGGGRRPGGIQHSQQQNPMMQQQ). Residues 492-507 (GGIQHSQQQNPMMQQQ) are compositionally biased toward low complexity. The region spanning 539–616 (TIGALASNLS…AMDVLRSVAA (78 aa)) is the PABC domain.

Belongs to the polyadenylate-binding protein type-1 family. In terms of assembly, interacts with eIF-iso4G. Interacts with ERD15/CID1 and CID7. Interacts with Turnip mosaic virus (TuMV) VPg-Pro and RNA-dependent RNA polymerase (RdRp). In terms of tissue distribution, expressed in all organs (at the protein level) but under distinct spatial and temporal regulation within each organ.

It localises to the cytoplasm. The protein resides in the nucleus. Its function is as follows. Binds the poly(A) tail of mRNA. Appears to be an important mediator of the multiple roles of the poly(A) tail in mRNA biogenesis, stability and translation. In the cytoplasm, affects both translation and mRNA decay. Stimulates translation by interaction with translation initiation factor eIF4G, a subunit of the cap-binding complex eIF4F, bringing the 5'- and 3'-ends of the mRNA in proximity. The formation of this circular mRNP structure appears to be critical for the synergistic effects of the cap and the poly(A) tail in facilitating translation initiation, recycling of ribosomes, and mRNA stability. During infection with potyvirus TuMV, acts as a potential integral component of the viral replicase complex that could play an important role in the regulation of potyviral RNA-dependent RNA polymerase (RdRp). Binds to uridylated mRNAs and determines the size of uridine extensions. Limits uridine extension by URT1, likely by binding to the oligo(A) tail and preventing URT1 access. This Arabidopsis thaliana (Mouse-ear cress) protein is Polyadenylate-binding protein 2 (PAB2).